We begin with the raw amino-acid sequence, 196 residues long: Probable GTP-binding protein EngB (196 aa).

The 173-residue stretch at 24–196 (ELSEVALSGR…IWNLIEPYIS (173 aa)) folds into the EngB-type G domain. GTP contacts are provided by residues 32–39 (GRSNVGKS), 59–63 (GKTQT), 77–80 (DVPG), 144–147 (TKED), and 176–178 (YSS). Mg(2+) is bound by residues S39 and T61.

It belongs to the TRAFAC class TrmE-Era-EngA-EngB-Septin-like GTPase superfamily. EngB GTPase family. It depends on Mg(2+) as a cofactor.

Its function is as follows. Necessary for normal cell division and for the maintenance of normal septation. In Staphylococcus aureus (strain Mu3 / ATCC 700698), this protein is Probable GTP-binding protein EngB.